Here is a 121-residue protein sequence, read N- to C-terminus: Large ribosomal subunit protein uL18 (121 aa).

This sequence belongs to the universal ribosomal protein uL18 family. In terms of assembly, part of the 50S ribosomal subunit; part of the 5S rRNA/L5/L18/L25 subcomplex. Contacts the 5S and 23S rRNAs.

Its function is as follows. This is one of the proteins that bind and probably mediate the attachment of the 5S RNA into the large ribosomal subunit, where it forms part of the central protuberance. The sequence is that of Large ribosomal subunit protein uL18 from Buchnera aphidicola subsp. Baizongia pistaciae (strain Bp).